Here is a 245-residue protein sequence, read N- to C-terminus: tRNA1(Val) (adenine(37)-N6)-methyltransferase (245 aa).

This sequence belongs to the methyltransferase superfamily. tRNA (adenine-N(6)-)-methyltransferase family.

It localises to the cytoplasm. The enzyme catalyses adenosine(37) in tRNA1(Val) + S-adenosyl-L-methionine = N(6)-methyladenosine(37) in tRNA1(Val) + S-adenosyl-L-homocysteine + H(+). Functionally, specifically methylates the adenine in position 37 of tRNA(1)(Val) (anticodon cmo5UAC). The sequence is that of tRNA1(Val) (adenine(37)-N6)-methyltransferase from Salmonella paratyphi C (strain RKS4594).